The primary structure comprises 492 residues: Trigger factor (492 aa).

The PPIase FKBP-type domain maps to 164-249; that stretch reads GDLVVVDFVG…VSDVRVPRKA (86 aa). The disordered stretch occupies residues 440-492; the sequence is EAEEDSIGKHDHDHDHKEKASDKPKAKKAAAPKKKAAPKKKAAPKAEKKSSDE. The span at 445-463 shows a compositional bias: basic and acidic residues; sequence SIGKHDHDHDHKEKASDKP. Residues 464–482 show a composition bias toward basic residues; the sequence is KAKKAAAPKKKAAPKKKAA. The segment covering 483–492 has biased composition (basic and acidic residues); the sequence is PKAEKKSSDE.

It belongs to the FKBP-type PPIase family. Tig subfamily.

Its subcellular location is the cytoplasm. It catalyses the reaction [protein]-peptidylproline (omega=180) = [protein]-peptidylproline (omega=0). Its function is as follows. Involved in protein export. Acts as a chaperone by maintaining the newly synthesized protein in an open conformation. Functions as a peptidyl-prolyl cis-trans isomerase. This chain is Trigger factor, found in Zymomonas mobilis subsp. mobilis (strain ATCC 31821 / ZM4 / CP4).